A 200-amino-acid chain; its full sequence is Large ribosomal subunit protein bL25 (200 aa).

Belongs to the bacterial ribosomal protein bL25 family. CTC subfamily. Part of the 50S ribosomal subunit; part of the 5S rRNA/L5/L18/L25 subcomplex. Contacts the 5S rRNA. Binds to the 5S rRNA independently of L5 and L18.

Its function is as follows. This is one of the proteins that binds to the 5S RNA in the ribosome where it forms part of the central protuberance. The sequence is that of Large ribosomal subunit protein bL25 from Caldicellulosiruptor bescii (strain ATCC BAA-1888 / DSM 6725 / KCTC 15123 / Z-1320) (Anaerocellum thermophilum).